Reading from the N-terminus, the 464-residue chain is Siroheme synthase (464 aa).

The interval 1–203 (MDYLPLFHKL…GQGAEAERLL (203 aa)) is precorrin-2 dehydrogenase /sirohydrochlorin ferrochelatase. Residues 22-23 (EI) and 43-44 (PE) each bind NAD(+). S128 carries the phosphoserine modification. Positions 216–464 (GEVYLVGAGP…AWFEGSQQDQ (249 aa)) are uroporphyrinogen-III C-methyltransferase. Position 225 (P225) interacts with S-adenosyl-L-methionine. D248 acts as the Proton acceptor in catalysis. The active-site Proton donor is the K270. Residues 301-303 (GGD), I306, 331-332 (TA), M383, and G412 each bind S-adenosyl-L-methionine.

This sequence in the N-terminal section; belongs to the precorrin-2 dehydrogenase / sirohydrochlorin ferrochelatase family. The protein in the C-terminal section; belongs to the precorrin methyltransferase family.

It carries out the reaction uroporphyrinogen III + 2 S-adenosyl-L-methionine = precorrin-2 + 2 S-adenosyl-L-homocysteine + H(+). It catalyses the reaction precorrin-2 + NAD(+) = sirohydrochlorin + NADH + 2 H(+). The catalysed reaction is siroheme + 2 H(+) = sirohydrochlorin + Fe(2+). The protein operates within cofactor biosynthesis; adenosylcobalamin biosynthesis; precorrin-2 from uroporphyrinogen III: step 1/1. Its pathway is cofactor biosynthesis; adenosylcobalamin biosynthesis; sirohydrochlorin from precorrin-2: step 1/1. It functions in the pathway porphyrin-containing compound metabolism; siroheme biosynthesis; precorrin-2 from uroporphyrinogen III: step 1/1. It participates in porphyrin-containing compound metabolism; siroheme biosynthesis; siroheme from sirohydrochlorin: step 1/1. The protein operates within porphyrin-containing compound metabolism; siroheme biosynthesis; sirohydrochlorin from precorrin-2: step 1/1. In terms of biological role, multifunctional enzyme that catalyzes the SAM-dependent methylations of uroporphyrinogen III at position C-2 and C-7 to form precorrin-2 via precorrin-1. Then it catalyzes the NAD-dependent ring dehydrogenation of precorrin-2 to yield sirohydrochlorin. Finally, it catalyzes the ferrochelation of sirohydrochlorin to yield siroheme. In Pseudomonas putida (strain W619), this protein is Siroheme synthase.